A 316-amino-acid chain; its full sequence is PAK4-inhibitor inka2 (316 aa).

Disordered regions lie at residues 43–74 and 108–130; these read RSSP…SHRT and YSEV…ESET. The segment covering 65-74 has biased composition (basic and acidic residues); sequence RRDNRISHRT. The segment covering 119–129 has biased composition (acidic residues); that stretch reads EEDDIVEEESE. Positions 182–219 are inka box; that stretch reads DSQDWTGCLLSQSRSRQPLVLGDNSFADLVKQWMDLPE.

Belongs to the INKA family.

The protein localises to the nucleus. In terms of biological role, inhibitor of the serine/threonine-protein kinase pak4/pak5. Acts by binding pak4/pak5 in a substrate-like manner, inhibiting the protein kinase activity. The polypeptide is PAK4-inhibitor inka2 (Xenopus laevis (African clawed frog)).